A 43-amino-acid polypeptide reads, in one-letter code: Protein PsbN (43 aa).

The chain crosses the membrane as a helical span at residues 5-27; it reads TLVTISISCLLVSFTGYAIYTSF.

The protein belongs to the PsbN family.

It is found in the plastid. It localises to the chloroplast thylakoid membrane. May play a role in photosystem I and II biogenesis. This chain is Protein PsbN, found in Welwitschia mirabilis (Tree tumbo).